The chain runs to 454 residues: Nuclear envelope integral membrane protein (454 aa).

Positions 1–18 (MHSAGLLMLTVAGYFTSG) are cleaved as a signal peptide. N-linked (GlcNAc...) asparagine glycosylation occurs at N38. 5 consecutive transmembrane segments (helical) span residues 138-158 (IPLD…LFSA), 166-186 (VFYY…VVIY), 197-217 (MMYG…KQLA), 231-251 (VLGY…RIGP), and 280-300 (TSAV…PISW). Residues 388 to 405 (SMDAAPEEESVEEPEEDK) are compositionally biased toward acidic residues. Residues 388-454 (SMDAAPEEES…QEVDLRQVVQ (67 aa)) are disordered. Residues 414–424 (NSQFRYQQAAR) are compositionally biased toward polar residues. A compositionally biased stretch (acidic residues) spans 428–446 (PEPESESDDSEEEEFFEQE).

The protein belongs to the NEMP family. As to quaternary structure, interacts with OTE. As to expression, expressed in both germline and somatic cells in the larval testis and prepupal ovary (at protein level). Also detected in the larval eye and larval wing disk (at protein level).

Its subcellular location is the nucleus inner membrane. Functionally, contributes to nuclear envelope stiffness in germ cells. Required for male and female fertility. In Drosophila melanogaster (Fruit fly), this protein is Nuclear envelope integral membrane protein.